A 125-amino-acid polypeptide reads, in one-letter code: Outer membrane protein assembly factor BamE (125 aa).

The signal sequence occupies residues 1–17 (MNKTLILALSALLGLAA). C18 carries N-palmitoyl cysteine lipidation. Residue C18 is the site of S-diacylglycerol cysteine attachment.

This sequence belongs to the BamE family. In terms of assembly, part of the Bam complex.

Its subcellular location is the cell outer membrane. Its function is as follows. Part of the outer membrane protein assembly complex, which is involved in assembly and insertion of beta-barrel proteins into the outer membrane. The polypeptide is Outer membrane protein assembly factor BamE (Neisseria meningitidis serogroup B (strain ATCC BAA-335 / MC58)).